The chain runs to 324 residues: Acetyl-coenzyme A carboxylase carboxyl transferase subunit alpha (324 aa).

In terms of domain architecture, CoA carboxyltransferase C-terminal spans glutamine 44–glutamate 298.

This sequence belongs to the AccA family. As to quaternary structure, acetyl-CoA carboxylase is a heterohexamer composed of biotin carboxyl carrier protein (AccB), biotin carboxylase (AccC) and two subunits each of ACCase subunit alpha (AccA) and ACCase subunit beta (AccD).

It localises to the cytoplasm. It carries out the reaction N(6)-carboxybiotinyl-L-lysyl-[protein] + acetyl-CoA = N(6)-biotinyl-L-lysyl-[protein] + malonyl-CoA. It functions in the pathway lipid metabolism; malonyl-CoA biosynthesis; malonyl-CoA from acetyl-CoA: step 1/1. Functionally, component of the acetyl coenzyme A carboxylase (ACC) complex. First, biotin carboxylase catalyzes the carboxylation of biotin on its carrier protein (BCCP) and then the CO(2) group is transferred by the carboxyltransferase to acetyl-CoA to form malonyl-CoA. The sequence is that of Acetyl-coenzyme A carboxylase carboxyl transferase subunit alpha from Rippkaea orientalis (strain PCC 8801 / RF-1) (Cyanothece sp. (strain PCC 8801)).